The sequence spans 356 residues: Mitogen-activated protein kinase PMK11 (356 aa).

The Protein kinase domain maps to 24–312; that stretch reads YDIQDVVGEG…VEEALKHPYL (289 aa). ATP is bound by residues 30-38 and lysine 53; that span reads VGEGAYGVV.

It belongs to the protein kinase superfamily. CMGC Ser/Thr protein kinase family. MAP kinase subfamily. Requires Mg(2+) as cofactor. In terms of processing, phosphorylated by MST7.

The enzyme catalyses L-seryl-[protein] + ATP = O-phospho-L-seryl-[protein] + ADP + H(+). It catalyses the reaction L-threonyl-[protein] + ATP = O-phospho-L-threonyl-[protein] + ADP + H(+). In terms of biological role, mitogen-activated protein kinase; part of the MST11-MST7-PMK1 MAP kinase (MAPK) cascade that is essential for appressorium formation, penetration and invasive growth. Central regulator of appressorium development that acts downstream of the cAMP signal. The MST11-MST7-PMK1 MAP kinase cascade transduces signals from the cell surface sensors MDB2 and SHO1 that recognize various surface signals such as surface hydrophobicity, cutin monomers, and rice leaf waxes. Regulates expression of secreted fungal effector proteins implicated of host immune defenses, preventing reactive oxygen species generation and excessive callose deposition at plasmodesmata. Furthermore, controls the hyphal constriction required for fungal growth from one rice cell to the neighboring cell, enabling host tissue colonization and blast disease. Targets downstream of the PMK1-MAPK pathway include transcription factor MST12 and pathogenicity-related genes GAS1 and GAS2, both of which are expressed during appressorium formation, even if regulation of MST12 is not associated with expression of GAS1 or GAS2. This is Mitogen-activated protein kinase PMK11 from Pyricularia oryzae (strain 70-15 / ATCC MYA-4617 / FGSC 8958) (Rice blast fungus).